Here is a 440-residue protein sequence, read N- to C-terminus: Xylose isomerase (440 aa).

Catalysis depends on residues histidine 100 and aspartate 103. Residues glutamate 231, glutamate 267, histidine 270, aspartate 295, aspartate 306, aspartate 308, and aspartate 338 each contribute to the Mg(2+) site.

Belongs to the xylose isomerase family. As to quaternary structure, homotetramer. Requires Mg(2+) as cofactor.

Its subcellular location is the cytoplasm. It carries out the reaction alpha-D-xylose = alpha-D-xylulofuranose. The polypeptide is Xylose isomerase (Burkholderia multivorans (strain ATCC 17616 / 249)).